The sequence spans 94 residues: MRQCASASSSTSRPPEAAGEEGKRRRRRRGWLLQAAAREQRSRFYIFRRCVAMLLCWYKYRNITPYNVVPLGIYGLVWFATMPKYWQCQTIGKF.

The span at 1 to 13 (MRQCASASSSTSR) shows a compositional bias: polar residues. The interval 1-26 (MRQCASASSSTSRPPEAAGEEGKRRR) is disordered. Residues 28-59 (RRGWLLQAAAREQRSRFYIFRRCVAMLLCWYK) are required for DVL/RTFL small polypeptide activity. A helical transmembrane segment spans residues 63-82 (ITPYNVVPLGIYGLVWFATM).

It belongs to the DVL/RTFL small polypeptides family.

It localises to the cell membrane. Its function is as follows. Small polypeptide acting as a regulatory molecule which coordinates cellular responses required for differentiation, growth and development, probably by restricting polar cell proliferation in lateral organs. This Oryza sativa subsp. japonica (Rice) protein is Small polypeptide ROTUNDIFOLIA LIKE 1.